The sequence spans 250 residues: Type III pantothenate kinase (250 aa).

Aspartate 13 to lysine 20 is an ATP binding site. Glycine 110–leucine 113 is a substrate binding site. Catalysis depends on aspartate 112, which acts as the Proton acceptor. Residue threonine 134 coordinates ATP. Threonine 186 contacts substrate.

This sequence belongs to the type III pantothenate kinase family. Homodimer. NH4(+) serves as cofactor. It depends on K(+) as a cofactor.

The protein resides in the cytoplasm. The catalysed reaction is (R)-pantothenate + ATP = (R)-4'-phosphopantothenate + ADP + H(+). The protein operates within cofactor biosynthesis; coenzyme A biosynthesis; CoA from (R)-pantothenate: step 1/5. Its function is as follows. Catalyzes the phosphorylation of pantothenate (Pan), the first step in CoA biosynthesis. In Mycoplasmopsis synoviae (strain 53) (Mycoplasma synoviae), this protein is Type III pantothenate kinase.